The primary structure comprises 1687 residues: A-kinase anchor protein 12 (1687 aa).

The segment at 1–108 (MGAGSSTEQR…EKDRVEEMAA (108 aa)) is disordered. The N-myristoyl glycine moiety is linked to residue G2. Residues S11, S18, S22, and S27 each carry the phosphoserine modification. Positions 30-48 (GPAAEASGAAGDPADADPA) are enriched in low complexity. Residues 52–62 (PQKNGQLSTVN) show a composition bias toward polar residues. Residues 75-88 (ENQEGQEEEVVDED) show a composition bias toward acidic residues. A compositionally biased stretch (basic and acidic residues) spans 89–105 (VGQRESEDVREKDRVEE). Phosphoserine occurs at positions 136 and 204. Disordered stretches follow at residues 175–282 (SDTV…ETTS) and 298–355 (KTSF…DYEK). Over residues 213–230 (ASKESELKQSTEKQEGTL) the composition is skewed to basic and acidic residues. Phosphoserine occurs at positions 235 and 245. Residues 247–259 (QAAEEEAKDEGEE) are compositionally biased toward acidic residues. Residues 254–544 (KDEGEEKQEK…QHIHTESPES (291 aa)) form an involved in PKC-binding region. S268, S271, S274, and S304 each carry phosphoserine. Over residues 268–282 (SPESPSSPVSSETTS) the composition is skewed to low complexity. A compositionally biased stretch (basic and acidic residues) spans 303-321 (KSKEDDLETAEKRKEQEAE). T331 is modified (phosphothreonine). Residues 334-344 (ASEEQEPAEDT) are compositionally biased toward acidic residues. Phosphoserine is present on residues S335 and S350. Residue Y353 is modified to Phosphotyrosine. Phosphoserine is present on S371. Residues 402–481 (VEKTEEEQGG…EKTLPKHPEG (80 aa)) are disordered. Residues 417–426 (GGVVVEGTGE) are compositionally biased toward low complexity. S469 is modified (phosphoserine). Positions 470 to 480 (PEEKTLPKHPE) are enriched in basic and acidic residues. S491, S507, and S509 each carry phosphoserine. Residues 496–828 (KVQGSPLKKL…INEDDPDVPA (333 aa)) are disordered. Over residues 499–513 (GSPLKKLFSSSGLKK) the composition is skewed to low complexity. The segment covering 514 to 523 (LSGKKQKGKR) has biased composition (basic residues). The span at 533–550 (EYQHIHTESPESADEQKG) shows a compositional bias: basic and acidic residues. A phosphoserine mark is found at S541, S544, S585, S599, S614, and S616. Residues 594-614 (ITPWASFKKMVTPKKRVRRPS) carry the AKAP CaM-binding 1 motif. Basic and acidic residues predominate over residues 612 to 626 (RPSESDKEEELEKVK). The segment covering 628–639 (ATLSSTDSTVSE) has biased composition (polar residues). Residue T629 is modified to Phosphothreonine. Phosphoserine occurs at positions 631, 632, 635, and 638. Residues 642-661 (DEVKTVGEEQKPEEPKRRVD) show a composition bias toward basic and acidic residues. S683, S684, and S685 each carry phosphoserine. Residues 697 to 711 (DSHRAEEASKDKEAG) show a composition bias toward basic and acidic residues. The segment covering 717 to 726 (ASTQEQDQAQ) has biased composition (polar residues). Residues 727–744 (GSSSPEPAGSPSEGEGVS) are compositionally biased toward low complexity. S736, S748, S770, S771, and S789 each carry phosphoserine. The AKAP CaM-binding 2 signature appears at 743–763 (VSTWESFKRLVTPRKKSKSKL). The AKAP CaM-binding 3 signature appears at 784 to 804 (EESWVSIKKFIPGRRKKRADG). The residue at position 871 (T871) is a Phosphothreonine. The residue at position 873 (S873) is a Phosphoserine. The tract at residues 959–981 (ETSEALRTEEVTEASGAEETTDM) is disordered. K1030 participates in a covalent cross-link: Glycyl lysine isopeptide (Lys-Gly) (interchain with G-Cter in SUMO1). Residues 1035–1045 (VPATQTVQRTG) show a composition bias toward polar residues. Disordered regions lie at residues 1035–1105 (VPAT…EVTA), 1125–1221 (AVAP…LAAA), 1277–1361 (CQEK…QDKA), and 1443–1487 (TPAP…TAIE). Residue S1059 is modified to Phosphoserine. Over residues 1130 to 1157 (SSETLTDSETNGSTPLADSDTADGTQQD) the composition is skewed to polar residues. The segment covering 1199-1211 (QEEHGEEPGRDVL) has biased composition (basic and acidic residues). The residue at position 1289 (S1289) is a Phosphoserine. Basic and acidic residues predominate over residues 1298-1310 (DVEKEKRETKPEQ). A phosphoserine mark is found at S1348, S1352, and S1354. Over residues 1462–1487 (QRERSEEEDKPDAGPDADGKESTAIE) the composition is skewed to basic and acidic residues. The RII-binding stretch occupies residues 1498–1511 (ELESKSNKIVLNVI). 2 disordered regions span residues 1522–1582 (ETAP…GSAS) and 1599–1687 (IEKL…LAES). A compositionally biased stretch (polar residues) spans 1530 to 1547 (YDSQTQVPAMQADSQGAQ). Phosphoserine is present on residues S1543 and S1571. A compositionally biased stretch (low complexity) spans 1618-1630 (QLQSLAQAEASAS). At S1637 the chain carries Phosphoserine. The span at 1645-1687 (LTEEGDAPKVEVQEEEMSTKSVKENKAQAEEDLQEPKGDLAES) shows a compositional bias: basic and acidic residues.

In terms of assembly, binds to dimeric RII-alpha regulatory subunit of PKC. Phosphorylated by PKC (in vitro).

It localises to the cytoplasm. The protein resides in the cytoskeleton. The protein localises to the membrane. Functionally, anchoring protein that mediates the subcellular compartmentation of protein kinase A (PKA) and protein kinase C (PKC). The sequence is that of A-kinase anchor protein 12 (Akap12) from Rattus norvegicus (Rat).